Reading from the N-terminus, the 94-residue chain is Co-chaperonin GroES (94 aa).

Belongs to the GroES chaperonin family. Heptamer of 7 subunits arranged in a ring. Interacts with the chaperonin GroEL.

Its subcellular location is the cytoplasm. Together with the chaperonin GroEL, plays an essential role in assisting protein folding. The GroEL-GroES system forms a nano-cage that allows encapsulation of the non-native substrate proteins and provides a physical environment optimized to promote and accelerate protein folding. GroES binds to the apical surface of the GroEL ring, thereby capping the opening of the GroEL channel. The polypeptide is Co-chaperonin GroES (Bacillus cereus (strain ZK / E33L)).